The chain runs to 695 residues: FMR1-interacting protein NUFIP2 (695 aa).

Positions 1–100 (MEEKPGQPQP…KTGYGELNGN (100 aa)) are disordered. Composition is skewed to basic residues over residues 11-23 (QHHH…HHHP) and 30-53 (PHHH…HHQQ). K78 participates in a covalent cross-link: Glycyl lysine isopeptide (Lys-Gly) (interchain with G-Cter in SUMO2). T87 carries the post-translational modification Phosphothreonine. K109 participates in a covalent cross-link: Glycyl lysine isopeptide (Lys-Gly) (interchain with G-Cter in SUMO2). Phosphoserine is present on residues S112 and S113. Glycyl lysine isopeptide (Lys-Gly) (interchain with G-Cter in SUMO2) cross-links involve residues K136, K146, K157, and K171. 4 disordered regions span residues 155–189 (IQKN…IPNG), 204–234 (GKGA…AKGC), 261–341 (FKPD…KPPP), and 369–402 (TIQN…SQVP). The span at 159–182 (SMDKKNGKSYENKSGENQSVDKSD) shows a compositional bias: basic and acidic residues. A phosphoserine mark is found at S212 and S214. Y218 is subject to Phosphotyrosine. Phosphothreonine occurs at positions 219 and 220. Positions 221–230 (PKKRKARRNS) are enriched in basic residues. A compositionally biased stretch (basic and acidic residues) spans 261–275 (FKPDYSEQKGNRVDG). Glycyl lysine isopeptide (Lys-Gly) (interchain with G-Cter in SUMO2) cross-links involve residues K262 and K281. R291 bears the Omega-N-methylarginine mark. Residue K293 forms a Glycyl lysine isopeptide (Lys-Gly) (interchain with G-Cter in SUMO2) linkage. At S304 the chain carries Phosphoserine. K307 is covalently cross-linked (Glycyl lysine isopeptide (Lys-Gly) (interchain with G-Cter in SUMO2)). Residues 373–396 (SSVSPTSSSSSSSSTGETQTQSSS) are compositionally biased toward low complexity. S376 is subject to Phosphoserine. T571 is modified (phosphothreonine). A phosphoserine mark is found at S572, S592, S608, and S629. T633 carries the phosphothreonine modification. Phosphoserine occurs at positions 637, 652, 655, and 692.

In terms of assembly, interacts with FMR1 (via N-terminus). Interacts with DDX6.

The protein resides in the nucleus. The protein localises to the cytoplasm. It localises to the stress granule. Functionally, binds RNA. The polypeptide is FMR1-interacting protein NUFIP2 (Homo sapiens (Human)).